Consider the following 777-residue polypeptide: UPF0313 protein VP1980 (777 aa).

The region spanning 363–642 (AYDMIKTSVN…KALLRYHDPA (280 aa)) is the Radical SAM core domain. Positions 377, 381, and 384 each coordinate [4Fe-4S] cluster. Residues 675-777 (AQTPAQRRKS…PAGQRKPKRR (103 aa)) are disordered. Residues 680 to 698 (QRRKSGRHGANRFATKHTK) show a composition bias toward basic residues. The span at 709 to 719 (KRAEGGSKDGK) shows a compositional bias: basic and acidic residues. The segment covering 736–747 (PASNGQRPSGNG) has biased composition (polar residues). Low complexity predominate over residues 755–769 (KPQGQGRPQGQGKPA).

Belongs to the UPF0313 family. The cofactor is [4Fe-4S] cluster.

In Vibrio parahaemolyticus serotype O3:K6 (strain RIMD 2210633), this protein is UPF0313 protein VP1980.